Consider the following 96-residue polypeptide: Citrate lyase acyl carrier protein (96 aa).

Ser14 carries the post-translational modification O-(phosphoribosyl dephospho-coenzyme A)serine.

This sequence belongs to the CitD family. Oligomer with a subunit composition of (alpha,beta,gamma)6.

The protein resides in the cytoplasm. In terms of biological role, covalent carrier of the coenzyme of citrate lyase. This chain is Citrate lyase acyl carrier protein, found in Lactiplantibacillus plantarum (strain ATCC BAA-793 / NCIMB 8826 / WCFS1) (Lactobacillus plantarum).